Consider the following 1106-residue polypeptide: Zinc finger protein GLI1 (1106 aa).

The tract at residues 1–20 (MFNSMTPPPISSYGEPCCLR) is SNAG domain. The segment at 120–124 (SYGHL) is interaction with SUFU. 5 consecutive C2H2-type zinc fingers follow at residues 235 to 260 (TDCRWDGCSQEFDSQEQLVHHINSEH), 268 to 295 (FVCHWGGCSRELRPFKAQYMLVVHMRRH), 301 to 325 (HKCTFEGCRKSYSRLENLKTHLRSH), 331 to 356 (YMCEHEGCSKAFSNASDRAKHQNRTH), and 362 to 387 (YVCKLPGCTKRYTDPSSLRKHVKTVH). The segment at 283–291 (KAQYMLVVH) is interaction with DNA. 2 interaction with DNA regions span residues 345-350 (ASDRAK) and 375-381 (DPSSLRK). Disordered stretches follow at residues 375–485 (DPSS…DEGP), 516–580 (GLKL…SLPG), 732–792 (YGGP…LYPG), 817–889 (EQGC…PTHS), and 914–942 (GREDAPAQEPSYQSPKFLGGSQVSPSRAK). Over residues 413–428 (EPKREREGGPIREESR) the composition is skewed to basic and acidic residues. Residues 442 to 463 (PGAQSSCSSDHSPAGSAANTDS) show a composition bias toward polar residues. N6-acetyllysine is present on K518. 2 stretches are compositionally biased toward low complexity: residues 544–560 (SSSSSISSAYTVSRRSS) and 737–753 (GAAAEPYGARGPGSLPL). Residues 754–766 (GPGPPTNYGPNPC) are compositionally biased toward pro residues. A compositionally biased stretch (polar residues) spans 768–779 (QQASYPDPTQET). K1003 is covalently cross-linked (Glycyl lysine isopeptide (Lys-Gly) (interchain with G-Cter in SUMO2)). Residues 1054–1087 (DEPQGLSPPPSHDQRGSSGHTPPPSGPPNMAVGN) are disordered.

This sequence belongs to the GLI C2H2-type zinc-finger protein family. Interacts with KIF7. Interacts with STK36. Interacts with ZIC1; the interaction enhances transcription activation. Interacts with SUFU; this inhibits transcriptional activation by GLI1. Phosphorylated in vitro by ULK3. Post-translationally, acetylation at Lys-518 down-regulates transcriptional activity. Deacetylated by HDAC1. In terms of processing, ubiquitinated by the CRL2(FEM1B) complex, suppressing GLI1 transcriptional activator activity. Detected in testis (at protein level). Testis, myometrium and fallopian tube. Also expressed in the brain with highest expression in the cerebellum, optic nerve and olfactory tract. Isoform 1 is detected in brain, spleen, pancreas, liver, kidney and placenta; isoform 2 is not detectable in these tissues.

Its subcellular location is the cytoplasm. The protein resides in the nucleus. Its function is as follows. Acts as a transcriptional activator. Binds to the DNA consensus sequence 5'-GACCACCCA-3'. Regulates the transcription of specific genes during normal development. Plays a role in craniofacial development and digital development, as well as development of the central nervous system and gastrointestinal tract. Mediates SHH signaling. Plays a role in cell proliferation and differentiation via its role in SHH signaling. In terms of biological role, acts as a transcriptional activator, but activates a different set of genes than isoform 1. Activates expression of CD24, unlike isoform 1. Mediates SHH signaling. Promotes cancer cell migration. In Homo sapiens (Human), this protein is Zinc finger protein GLI1 (GLI1).